Consider the following 920-residue polypeptide: Rho guanine nucleotide exchange factor 1 (920 aa).

Residues 39–230 (DQNSQFQSLE…SLYMRHLGVR (192 aa)) enclose the RGSL domain. Positions 231–404 (TKSGDKKSGR…PGWRELVPPD (174 aa)) are disordered. Basic and acidic residues predominate over residues 281–311 (DCRHLKVEADAEKPGPADRKGGLGMSSRDRT). Over residues 364-380 (STEDNGETESPEPGDDG) the composition is skewed to acidic residues. Residues serine 373, glycine 386, glutamate 390, serine 408, and serine 412 each carry the phosphoserine modification. Residues 415–604 (KRQEVISELL…REILHHVNQA (190 aa)) form the DH domain. A phosphothreonine mark is found at arginine 432 and threonine 694. One can recognise a PH domain in the interval 646–759 (KLVHEGPLTW…WCNLITETAG (114 aa)). Tyrosine 737 is subject to Phosphotyrosine; by JAK2. Disordered regions lie at residues 764-797 (PAPASRLKPRPSPSSIREPLLSSSENGTGGAEMA) and 840-864 (TEEDSGAGPPRDGDGVPGGRAPGPV). Residues 865 to 894 (HTQEIEENLLSLEVAIRQLEELEEEFCRLR) are a coiled coil. The residue at position 905 (serine 905) is a Phosphoserine.

As to quaternary structure, interacts with RHOA, GNA12 and GNA13. Homooligomerizes through the coiled coil region. Interacts with CTNNAL1. May interact with CCPG1. Post-translationally, phosphorylated by PKCA. Angiotensin-2 induced Tyr-737 phosphorylation is mediated by JAK2. Isoform 5 is phosphorylated at 'Ser-390'. In terms of tissue distribution, ubiquitously expressed.

The protein resides in the cytoplasm. It is found in the membrane. Functionally, seems to play a role in the regulation of RhoA GTPase by guanine nucleotide-binding alpha-12 (GNA12) and alpha-13 (GNA13) subunits. Acts as a GTPase-activating protein (GAP) for GNA12 and GNA13, and as guanine nucleotide exchange factor (GEF) for RhoA GTPase. Activated G alpha 13/GNA13 stimulates the RhoGEF activity through interaction with the RGS-like domain. This GEF activity is inhibited by binding to activated GNA12. Mediates angiotensin-2-induced RhoA activation. Isoform 3 and isoform 4 do not homooligomerize and show an enhanced RhoGEF activity. In lymphoid follicles, may trigger activation of GNA13 as part of S1PR2-dependent signaling pathway that leads to inhibition of germinal center (GC) B cell growth and migration outside the GC niche. The sequence is that of Rho guanine nucleotide exchange factor 1 (Arhgef1) from Mus musculus (Mouse).